We begin with the raw amino-acid sequence, 1003 residues long: UPF0182 protein Mkms_1433 (1003 aa).

The next 7 helical transmembrane spans lie at 18–38 (VLIGVALAAVVLLLIGPRFID), 63–83 (VVVFLVVSLLIGAIVFAGLAL), 114–134 (LFGFGVPAFIGILSGIVAQSY), 176–196 (FVATFLAFIANLLGHYLFGGI), 211–231 (IQLVTLVGILILLKAFAYWLD), 260–280 (KLILLAIAVICAVAVFSAIVL), and 288–308 (IGVVLLLLSSLVVGAGWPLVV). The segment covering 902–937 (ATGPAPANLPDGQPAAQPPNGQQPAAQTPGNQAGRA) has biased composition (low complexity). Positions 902-979 (ATGPAPANLP…MSGLQDAQRS (78 aa)) are disordered.

The protein belongs to the UPF0182 family.

It is found in the cell membrane. The sequence is that of UPF0182 protein Mkms_1433 from Mycobacterium sp. (strain KMS).